The primary structure comprises 773 residues: Cellobiose dehydrogenase (773 aa).

The first 18 residues, 1 to 18, serve as a signal peptide directing secretion; that stretch reads MLGRSLLALLPFVGLAFS. Glutamine 19 is modified (pyrrolidone carboxylic acid). The heme domain stretch occupies residues 19-208; it reads QSASQFTDPT…YQNYLNGDSG (190 aa). Positions 83 and 181 each coordinate heme. The tract at residues 203–227 is disordered; sequence LNGDSGNPTTTSTKPTSTSSSVTTG. Over residues 210–227 the composition is skewed to low complexity; the sequence is PTTTSTKPTSTSSSVTTG. An oxidoreductase region spans residues 235–773; it reads YDYIIVGAGP…AKILALAGGP (539 aa). Residue 236–265 participates in FAD binding; the sequence is DYIIVGAGPGGIIAADRLSEAGKKVLLLER. Catalysis depends on histidine 707, which acts as the Proton acceptor.

The protein in the C-terminal section; belongs to the GMC oxidoreductase family. FAD is required as a cofactor. The cofactor is heme.

Its subcellular location is the secreted. The enzyme catalyses D-cellobiose + A = D-cellobiono-1,5-lactone + AH2. Degrades both lignin and cellulose. Oxidizes cellobiose to cellobionolactone. The protein is Cellobiose dehydrogenase (CDH-1) of Phanerodontia chrysosporium (White-rot fungus).